Consider the following 177-residue polypeptide: Large ribosomal subunit protein uL6 (177 aa).

It belongs to the universal ribosomal protein uL6 family. Part of the 50S ribosomal subunit.

This protein binds to the 23S rRNA, and is important in its secondary structure. It is located near the subunit interface in the base of the L7/L12 stalk, and near the tRNA binding site of the peptidyltransferase center. The polypeptide is Large ribosomal subunit protein uL6 (Alteromonas mediterranea (strain DSM 17117 / CIP 110805 / LMG 28347 / Deep ecotype)).